Consider the following 131-residue polypeptide: Small ribosomal subunit protein uS8 (131 aa).

Belongs to the universal ribosomal protein uS8 family. As to quaternary structure, part of the 30S ribosomal subunit. Contacts proteins S5 and S12.

Functionally, one of the primary rRNA binding proteins, it binds directly to 16S rRNA central domain where it helps coordinate assembly of the platform of the 30S subunit. In Pelagibacter ubique (strain HTCC1062), this protein is Small ribosomal subunit protein uS8.